The chain runs to 220 residues: Casparian strip membrane protein 4 (220 aa).

The interval 1–39 is disordered; it reads MDSRREVEESSTAPILESKRTRSNGKGKSIDGDHSPPHA. At 1-60 the chain is on the cytoplasmic side; sequence MDSRREVEESSTAPILESKRTRSNGKGKSIDGDHSPPHAATVVTTKATPLQKGGMKKGIA. A helical transmembrane segment spans residues 61–81; the sequence is ILDFILRLGAIGAALGAAVIM. Residues 82 to 108 are Extracellular-facing; it reads GTNEQILPFFTQFLQFHAQWDDFPMFK. A helical membrane pass occupies residues 109-129; that stretch reads FFVVANGAAAGFLILSLPFSI. Over 130 to 141 the chain is Cytoplasmic; that stretch reads VCIVRPLAAGPR. The chain crosses the membrane as a helical span at residues 142–162; sequence FLLVIVDLVLMALVVAAASSA. At 163-194 the chain is on the extracellular side; it reads AAVVYLAHNGSQDANWNAICQQFTDFCQGSSL. Asparagine 171 carries an N-linked (GlcNAc...) asparagine glycan. The chain crosses the membrane as a helical span at residues 195–215; sequence AVVASFVASVFLACLVVVSSV. Topologically, residues 216–220 are cytoplasmic; sequence ALKRT.

It belongs to the Casparian strip membrane proteins (CASP) family. As to quaternary structure, homodimer and heterodimers.

It is found in the cell membrane. Functionally, regulates membrane-cell wall junctions and localized cell wall deposition. Required for establishment of the Casparian strip membrane domain (CSD) and the subsequent formation of Casparian strips, a cell wall modification of the root endodermis that determines an apoplastic barrier between the intraorganismal apoplasm and the extraorganismal apoplasm and prevents lateral diffusion. The polypeptide is Casparian strip membrane protein 4 (Medicago truncatula (Barrel medic)).